The sequence spans 599 residues: Putative sensor histidine kinase NtrY-like (599 aa).

4 helical membrane-spanning segments follow: residues 17 to 37 (ILIL…FYVI), 44 to 64 (FSTI…LGIL), 85 to 105 (IVIA…VFSV), and 285 to 305 (IMFI…GVLF). In terms of domain architecture, HAMP spans 307–361 (AQIVKPIKKLVTATDKVKDGDLTVQVPENEVDKDEIGTLYVAFNRMIKQLSRQQR). A Histidine kinase domain is found at 378–589 (KVAHEIKNPL…IIDIKFDLKE (212 aa)). A Phosphohistidine; by autocatalysis modification is found at His381.

The protein localises to the cell membrane. The enzyme catalyses ATP + protein L-histidine = ADP + protein N-phospho-L-histidine.. Member of the two-component regulatory system RT0603/RT0550. The protein is Putative sensor histidine kinase NtrY-like of Rickettsia typhi (strain ATCC VR-144 / Wilmington).